The following is a 52-amino-acid chain: Repressor-like protein SSo7c3 (52 aa).

The SpoVT-AbrB domain occupies 4–51; sequence EEVVKVSRNYQVTIPAKVRQKFPVKEGDLVKVIYDENGGVVKIQILDS.

This Saccharolobus solfataricus (strain ATCC 35092 / DSM 1617 / JCM 11322 / P2) (Sulfolobus solfataricus) protein is Repressor-like protein SSo7c3.